The primary structure comprises 422 residues: Serine--tRNA ligase (422 aa).

Position 229–231 (229–231 (TAE)) interacts with L-serine. ATP is bound at residue 260–262 (RKE). Residue Glu-283 participates in L-serine binding. 347-350 (EISS) lines the ATP pocket. Ser-383 is a binding site for L-serine.

This sequence belongs to the class-II aminoacyl-tRNA synthetase family. Type-1 seryl-tRNA synthetase subfamily. As to quaternary structure, homodimer. The tRNA molecule binds across the dimer.

It localises to the cytoplasm. It catalyses the reaction tRNA(Ser) + L-serine + ATP = L-seryl-tRNA(Ser) + AMP + diphosphate + H(+). The catalysed reaction is tRNA(Sec) + L-serine + ATP = L-seryl-tRNA(Sec) + AMP + diphosphate + H(+). Its pathway is aminoacyl-tRNA biosynthesis; selenocysteinyl-tRNA(Sec) biosynthesis; L-seryl-tRNA(Sec) from L-serine and tRNA(Sec): step 1/1. In terms of biological role, catalyzes the attachment of serine to tRNA(Ser). Is also able to aminoacylate tRNA(Sec) with serine, to form the misacylated tRNA L-seryl-tRNA(Sec), which will be further converted into selenocysteinyl-tRNA(Sec). This is Serine--tRNA ligase from Geotalea uraniireducens (strain Rf4) (Geobacter uraniireducens).